Consider the following 707-residue polypeptide: Dendrin (707 aa).

Disordered regions lie at residues 1-22, 67-86, 94-195, 213-273, and 342-377; these read MLDG…DEES, QNRT…RRPW, ATNW…PWGG, AGTA…KKRL, and TEVA…GSEE. Residues 103-134 are a coiled coil; the sequence is AEVRAREQEKRKAASQEREAKETERKRRKAGG. A compositionally biased stretch (basic and acidic residues) spans 105-127; it reads VRAREQEKRKAASQEREAKETER. A nuclear localization region spans residues 113 to 131; sequence RKAASQEREAKETERKRRK. Residues 186 to 236 are interaction with MAGI2; sequence GVAWAGPWGGRRPGPPSYEAHLLLRGAAGTAPRRRWDRPPPYVAPPSYEGP. Residues 340-434 are interaction with ACTN1; it reads PVTEVALSGS…LEVWKVTRRA (95 aa). Over residues 359 to 369 the composition is skewed to basic residues; it reads PRSRQHLRGSR. S387 carries the post-translational modification Phosphoserine. Disordered stretches follow at residues 389-421 and 517-707; these read KKPP…EGTE and RVLN…GKRE. The interaction with CD2AP and NPHS1 stretch occupies residues 406–707; the sequence is GGTGWKESLG…TRKTPQGKRE (302 aa). Composition is skewed to basic and acidic residues over residues 524–544 and 692–707; these read EGRE…EERS and GLVR…GKRE.

As to quaternary structure, forms a ternary complex with MAGI2 and SH3KBP1; recruits DDN to the cytoplasm. Interacts with MAGI1. Interacts with ACTN1 and may interact with WWC1. Interacts with the podocyte slit diaphragm proteins CD2AP, NPHS1 and NPHS2; the interaction with CD2AP and NPHS1 is direct. As to expression, specifically expressed in forebrain structures, particularly in neocortex, olfactory bulb, hippocampus, caudate-putamen, and limbic system (at protein level). Also detected in spleen, liver, kidney and placenta (at protein level).

Its subcellular location is the cell projection. It localises to the dendritic spine membrane. It is found in the cytoplasm. The protein localises to the endoplasmic reticulum membrane. The protein resides in the perikaryon. Its subcellular location is the nucleus. Its function is as follows. Promotes apoptosis of kidney glomerular podocytes. Podocytes are highly specialized cells essential to the ultrafiltration of blood, resulting in the extraction of urine and the retention of protein. The protein is Dendrin (Ddn) of Rattus norvegicus (Rat).